A 213-amino-acid chain; its full sequence is Thiamine-phosphate synthase (213 aa).

4-amino-2-methyl-5-(diphosphooxymethyl)pyrimidine-binding positions include 38-42 (QLREK) and Asp70. Mg(2+) is bound by residues Asp71 and Glu90. Ser109 is a 4-amino-2-methyl-5-(diphosphooxymethyl)pyrimidine binding site. Residue 135 to 137 (TQT) coordinates 2-[(2R,5Z)-2-carboxy-4-methylthiazol-5(2H)-ylidene]ethyl phosphate. Residue Lys138 coordinates 4-amino-2-methyl-5-(diphosphooxymethyl)pyrimidine. Residues Gly165 and 185-186 (VS) contribute to the 2-[(2R,5Z)-2-carboxy-4-methylthiazol-5(2H)-ylidene]ethyl phosphate site.

This sequence belongs to the thiamine-phosphate synthase family. Mg(2+) is required as a cofactor.

It catalyses the reaction 2-[(2R,5Z)-2-carboxy-4-methylthiazol-5(2H)-ylidene]ethyl phosphate + 4-amino-2-methyl-5-(diphosphooxymethyl)pyrimidine + 2 H(+) = thiamine phosphate + CO2 + diphosphate. The enzyme catalyses 2-(2-carboxy-4-methylthiazol-5-yl)ethyl phosphate + 4-amino-2-methyl-5-(diphosphooxymethyl)pyrimidine + 2 H(+) = thiamine phosphate + CO2 + diphosphate. The catalysed reaction is 4-methyl-5-(2-phosphooxyethyl)-thiazole + 4-amino-2-methyl-5-(diphosphooxymethyl)pyrimidine + H(+) = thiamine phosphate + diphosphate. Its pathway is cofactor biosynthesis; thiamine diphosphate biosynthesis; thiamine phosphate from 4-amino-2-methyl-5-diphosphomethylpyrimidine and 4-methyl-5-(2-phosphoethyl)-thiazole: step 1/1. In terms of biological role, condenses 4-methyl-5-(beta-hydroxyethyl)thiazole monophosphate (THZ-P) and 2-methyl-4-amino-5-hydroxymethyl pyrimidine pyrophosphate (HMP-PP) to form thiamine monophosphate (TMP). The chain is Thiamine-phosphate synthase from Lacticaseibacillus paracasei (strain ATCC 334 / BCRC 17002 / CCUG 31169 / CIP 107868 / KCTC 3260 / NRRL B-441) (Lactobacillus paracasei).